The primary structure comprises 306 residues: Mating type protein SmtA-1 (306 aa).

The alpha box DNA-binding region spans 49-104 (APKKKVNGFMGFRSYYSPLFSQFPQKARSPFMTILWQHDPFHNEWDFMCSVYSSIR).

The protein belongs to the MATALPHA1 family.

It is found in the nucleus. Its function is as follows. Mating type proteins are sequence specific DNA-binding proteins that act as master switches in fungal differentiation by controlling gene expression in a cell type-specific fashion. Transcriptional activator that induces the transcription of alpha-specific genes. This Sordaria macrospora (strain ATCC MYA-333 / DSM 997 / K(L3346) / K-hell) protein is Mating type protein SmtA-1 (SMTA1).